We begin with the raw amino-acid sequence, 899 residues long: Semaphorin-1A (899 aa).

Over residues 1 to 20 (MLNSHNTNHNNNSASNSNYN) the composition is skewed to low complexity. The disordered stretch occupies residues 1–24 (MLNSHNTNHNNNSASNSNYNKGHK). Residues 1-40 (MLNSHNTNHNNNSASNSNYNKGHKMHLKSATAKATIMKHK) are Cytoplasmic-facing. Residues 41-61 (LSKFYGYGWMQVFLLLTVLVI) traverse the membrane as a helical segment. Topologically, residues 62-657 (GNQSAWQENI…INAQYTVETL (596 aa)) are extracellular. 3 N-linked (GlcNAc...) asparagine glycosylation sites follow: Asn-63, Asn-90, and Asn-117. The Sema domain maps to 74–543 (KLYVELGPED…TDSQVVAIQL (470 aa)). 2 cysteine pairs are disulfide-bonded: Cys-141–Cys-151 and Cys-169–Cys-178. N-linked (GlcNAc...) asparagine glycans are attached at residues Asn-187, Asn-207, and Asn-311. 2 cysteine pairs are disulfide-bonded: Cys-288–Cys-402 and Cys-312–Cys-361. The N-linked (GlcNAc...) asparagine glycan is linked to Asn-404. A helical membrane pass occupies residues 658–678 (VMAVLAGSIFSLLVGFFTGYF). Over 679-899 (CGRRCHKDED…PKNCSYIYRD (221 aa)) the chain is Cytoplasmic. 2 disordered regions span residues 735–766 (VLLP…QGPN) and 798–899 (VMGD…IYRD). Residues 809 to 827 (FSTTRSVKKAVNNTNTRNR) show a composition bias toward polar residues. The segment covering 828–837 (SLGRARRQPP) has biased composition (basic residues). Low complexity predominate over residues 847-876 (SNSPQQQQQQSQQPHSSSGSSPVMSNSSSS).

The protein belongs to the semaphorin family. As to expression, expressed by subsets of neurons and muscles.

It localises to the cell membrane. In terms of biological role, involved in growth cone guidance through its role in axonal repulsion. Function in neurons is essential for adult survival, motor neuron survival, and is important for climbing behavior and activity. The sequence is that of Semaphorin-1A from Drosophila melanogaster (Fruit fly).